Here is a 1704-residue protein sequence, read N- to C-terminus: Arf-GAP with Rho-GAP domain, ANK repeat and PH domain-containing protein 2 (1704 aa).

The 65-residue stretch at 6–70 (EVNVDIKDFL…LKQLQIILSK (65 aa)) folds into the SAM domain. The residue at position 77 (Tyr-77) is a Phosphotyrosine. The tract at residues 126-161 (NLEDSDASVERSQYPQSDDKLSPPKRDFPTAEEPHL) is disordered. The segment covering 142–160 (SDDKLSPPKRDFPTAEEPH) has biased composition (basic and acidic residues). PH domains are found at residues 482–574 (KKVK…NALK) and 587–679 (TPEK…QSIA). One can recognise an Arf-GAP domain in the interval 676–811 (QSIAETLSDY…TLLASLTKEE (136 aa)). The C4-type zinc-finger motif lies at 700-723 (CADCKAPDPDWASINLCVVICKKC). PH domains lie at 878–1003 (DIHS…KHFV) and 1014–1114 (DYDL…AGTD). Positions 1116–1297 (NALQDQQLSK…DLINNYVEIF (182 aa)) constitute a Rho-GAP domain. Residues 1326-1420 (GDLLIEVYVE…AYLVVKRFLT (95 aa)) form the Ras-associating domain. The region spanning 1434-1537 (GSIKEGILKI…WMTSIFIAQH (104 aa)) is the PH 5 domain. Phosphoserine is present on Ser-1632. The interval 1636–1675 (LEDTEPEAPLGQPKGHKGLKTLRKTEDRNSKATLDSDHKL) is disordered. Positions 1658–1675 (RKTEDRNSKATLDSDHKL) are enriched in basic and acidic residues.

Detected in brain, thymus, lymph node, thyroid, spinal cord, trachea, heart, skeletal muscle, spleen, kidney, liver, placenta, lung and peripheral blood leukocytes.

It is found in the cytoplasm. Its function is as follows. Phosphatidylinositol 3,4,5-trisphosphate-dependent GTPase-activating protein that modulates actin cytoskeleton remodeling by regulating ARF and RHO family members. Is activated by phosphatidylinositol 3,4,5-trisphosphate (PtdIns(3,4,5)P3) binding. Can be activated by phosphatidylinositol 3,4-bisphosphate (PtdIns(3,4,5)P2) binding, albeit with lower efficiency. The polypeptide is Arf-GAP with Rho-GAP domain, ANK repeat and PH domain-containing protein 2 (ARAP2) (Homo sapiens (Human)).